The primary structure comprises 312 residues: DNA-directed RNA polymerase subunit alpha (312 aa).

The alpha N-terminal domain (alpha-NTD) stretch occupies residues 1–226; that stretch reads MIEFEKPIIT…EHLNLFTDLT (226 aa). The alpha C-terminal domain (alpha-CTD) stretch occupies residues 243 to 312; it reads DEKVLDRTIE…DLGLGLKNDK (70 aa).

This sequence belongs to the RNA polymerase alpha chain family. Homodimer. The RNAP catalytic core consists of 2 alpha, 1 beta, 1 beta' and 1 omega subunit. When a sigma factor is associated with the core the holoenzyme is formed, which can initiate transcription.

The catalysed reaction is RNA(n) + a ribonucleoside 5'-triphosphate = RNA(n+1) + diphosphate. In terms of biological role, DNA-dependent RNA polymerase catalyzes the transcription of DNA into RNA using the four ribonucleoside triphosphates as substrates. This chain is DNA-directed RNA polymerase subunit alpha, found in Streptococcus pyogenes serotype M3 (strain ATCC BAA-595 / MGAS315).